The primary structure comprises 695 residues: Elongation factor G 1 (695 aa).

The tr-type G domain maps to 6 to 281 (TRYRNIGIFA…AVVDYLPNPK (276 aa)). GTP-binding positions include 15 to 22 (AHVDAGKT), 79 to 83 (DTPGH), and 133 to 136 (NKLD).

This sequence belongs to the TRAFAC class translation factor GTPase superfamily. Classic translation factor GTPase family. EF-G/EF-2 subfamily.

It localises to the cytoplasm. Catalyzes the GTP-dependent ribosomal translocation step during translation elongation. During this step, the ribosome changes from the pre-translocational (PRE) to the post-translocational (POST) state as the newly formed A-site-bound peptidyl-tRNA and P-site-bound deacylated tRNA move to the P and E sites, respectively. Catalyzes the coordinated movement of the two tRNA molecules, the mRNA and conformational changes in the ribosome. The chain is Elongation factor G 1 (fusA) from Synechocystis sp. (strain ATCC 27184 / PCC 6803 / Kazusa).